Consider the following 766-residue polypeptide: Deoxynucleotidyltransferase terminal-interacting protein 2 (766 aa).

The interval 1 to 99 (MVVTRSARPQ…DCSSVPEVQD (99 aa)) is disordered. Polar residues-rich tracts occupy residues 13–28 (NEAT…NSAV) and 42–56 (SPDN…TTPE). Position 127 is a phosphothreonine (T127). Phosphoserine occurs at positions 139, 143, and 146. Residues 155-175 (TEITTRRSKAKSQREPKQESH) are disordered. Residues 166 to 175 (SQREPKQESH) are compositionally biased toward basic and acidic residues. S180 and S190 each carry phosphoserine. K217 participates in a covalent cross-link: Glycyl lysine isopeptide (Lys-Gly) (interchain with G-Cter in SUMO2). Position 229 is a phosphothreonine (T229). S236, S248, and S250 each carry phosphoserine. Residue K254 forms a Glycyl lysine isopeptide (Lys-Gly) (interchain with G-Cter in SUMO2) linkage. S258 is modified (phosphoserine). Residue K327 forms a Glycyl lysine isopeptide (Lys-Gly) (interchain with G-Cter in SUMO2) linkage. S334 carries the post-translational modification Phosphoserine. Disordered regions lie at residues 345–367 (VSQR…LNHE), 390–450 (KNAI…KDDS), and 520–557 (KAGE…DEDN). K394 participates in a covalent cross-link: Glycyl lysine isopeptide (Lys-Gly) (interchain with G-Cter in SUMO2). Over residues 421 to 434 (DMSKEKEVDSESDT) the composition is skewed to basic and acidic residues. Polar residues predominate over residues 435 to 444 (KPSNLEFNTT). Positions 515 to 552 (LDEEDKAGEVATEEEEEEEEEESEEELSDHDRNKDNEF) form a coiled coil. Acidic residues predominate over residues 520–542 (KAGEVATEEEEEEEEEESEEELS). The tdBR region; mediates interaction with DNTT stretch occupies residues 558–615 (LLSNTKSKLLKLMSSSIDTGLNIKELGGLYINFNADKVQLNKRTLTQMKEKRKDELLQ). Glycyl lysine isopeptide (Lys-Gly) (interchain with G-Cter in SUMO2) cross-links involve residues K568, K594, and K616. At T620 the chain carries Phosphothreonine. Residues K636, K659, K668, K696, and K741 each participate in a glycyl lysine isopeptide (Lys-Gly) (interchain with G-Cter in SUMO2) cross-link.

Forms a ternary complex with DNTT and core histone; interaction with PCNA releases DNTT and H2A/H2B histones from this ternary complex. Interacts with ESR1, ESR2, PPARG and RXRA. Part of the small subunit (SSU) processome, composed of more than 70 proteins and the RNA chaperone small nucleolar RNA (snoRNA) U3.

It localises to the nucleus. The protein resides in the nucleolus. Regulates the transcriptional activity of DNTT and ESR1. May function as a chromatin remodeling protein. Part of the small subunit (SSU) processome, first precursor of the small eukaryotic ribosomal subunit. During the assembly of the SSU processome in the nucleolus, many ribosome biogenesis factors, an RNA chaperone and ribosomal proteins associate with the nascent pre-rRNA and work in concert to generate RNA folding, modifications, rearrangements and cleavage as well as targeted degradation of pre-ribosomal RNA by the RNA exosome. This chain is Deoxynucleotidyltransferase terminal-interacting protein 2 (DNTTIP2), found in Bos taurus (Bovine).